Consider the following 203-residue polypeptide: Peroxiredoxin (203 aa).

Residues Val3 to Phe156 enclose the Thioredoxin domain. The active-site Cysteine sulfenic acid (-SOH) intermediate is the Cys44. Arg119 contacts substrate.

It belongs to the peroxiredoxin family. Prx6 subfamily. Homodecamer. Pentamer of dimers that assemble into a ring structure.

Its subcellular location is the cytoplasm. The catalysed reaction is a hydroperoxide + [thioredoxin]-dithiol = an alcohol + [thioredoxin]-disulfide + H2O. Functionally, thiol-specific peroxidase that catalyzes the reduction of hydrogen peroxide and organic hydroperoxides to water and alcohols, respectively. Plays a role in cell protection against oxidative stress by detoxifying peroxides. This chain is Peroxiredoxin, found in Thermoplasma volcanium (strain ATCC 51530 / DSM 4299 / JCM 9571 / NBRC 15438 / GSS1).